Consider the following 367-residue polypeptide: Germination protease (367 aa).

Positions 1–15 (MKEPLDLSKYSVRTD) are excised as a propeptide.

Belongs to the peptidase A25 family. As to quaternary structure, homotetramer. Post-translationally, autoproteolytically processed. The inactive tetrameric zymogen termed p46 autoprocesses to a smaller form termed p41, which is active only during spore germination.

It catalyses the reaction Endopeptidase action with P4 Glu or Asp, P1 preferably Glu &gt; Asp, P1' hydrophobic and P2' Ala.. Functionally, initiates the rapid degradation of small, acid-soluble proteins during spore germination. The sequence is that of Germination protease from Bacillus cereus (strain AH187).